The following is a 118-amino-acid chain: Large ribosomal subunit protein bL19 (118 aa).

It belongs to the bacterial ribosomal protein bL19 family.

Its function is as follows. This protein is located at the 30S-50S ribosomal subunit interface and may play a role in the structure and function of the aminoacyl-tRNA binding site. This is Large ribosomal subunit protein bL19 from Onion yellows phytoplasma (strain OY-M).